The following is a 147-amino-acid chain: uncharacterized protein (147 aa).

Residues 44–147 form the HTH LytTR-type domain; sequence LVGYIDKEIH…LKSIKERLSI (104 aa).

It is found in the cytoplasm. This is an uncharacterized protein from Staphylococcus aureus (strain MW2).